The primary structure comprises 239 residues: Phosphoribosylaminoimidazole-succinocarboxamide synthase (239 aa).

Belongs to the SAICAR synthetase family.

The enzyme catalyses 5-amino-1-(5-phospho-D-ribosyl)imidazole-4-carboxylate + L-aspartate + ATP = (2S)-2-[5-amino-1-(5-phospho-beta-D-ribosyl)imidazole-4-carboxamido]succinate + ADP + phosphate + 2 H(+). It participates in purine metabolism; IMP biosynthesis via de novo pathway; 5-amino-1-(5-phospho-D-ribosyl)imidazole-4-carboxamide from 5-amino-1-(5-phospho-D-ribosyl)imidazole-4-carboxylate: step 1/2. The protein is Phosphoribosylaminoimidazole-succinocarboxamide synthase of Dichelobacter nodosus (strain VCS1703A).